We begin with the raw amino-acid sequence, 872 residues long: Telomerase component p95 (872 aa).

Disordered regions lie at residues asparagine 55–lysine 75 and lysine 471–serine 492. Positions lysine 474–threonine 486 are enriched in basic and acidic residues.

In terms of assembly, telomerase consist of two subunit, p80 and p95 that form a 1:1:1 complex with the 159 nt telomerase RNA.

It is found in the nucleus. It localises to the chromosome. The protein localises to the telomere. The enzyme catalyses DNA(n) + a 2'-deoxyribonucleoside 5'-triphosphate = DNA(n+1) + diphosphate. Its function is as follows. Ribonucleoprotein DNA polymerase that catalyzes the de novo synthesis of telomeric simple sequence repeats. Subunit p95 contains some or all of the template-independent primer DNA-binding site termed the anchor site. In Tetrahymena thermophila, this protein is Telomerase component p95.